The primary structure comprises 168 residues: MCMCVVLVYFSILLDKGTKVLYTHDNNWLVILVFYFLAFGSIMRISGRTCSEEMKKSFGQASYHNGLQNFSKESPVGVNLEKKKTHISCCIILATQRFLQKFSNKRLGNPHLHPTRESTFSRELATENNSGNFPVLLRYHIFRQLDIENGILLCQVLQALIIVQVMFS.

2 helical membrane passes run 27 to 47 and 147 to 167; these read NWLVILVFYFLAFGSIMRISG and IENGILLCQVLQALIIVQVMF.

It localises to the membrane. This is an uncharacterized protein from Saccharomyces cerevisiae (strain ATCC 204508 / S288c) (Baker's yeast).